Here is a 269-residue protein sequence, read N- to C-terminus: MNKRFQGKVAVITGAAQGIGRRVAERMAAEGGRLLLVDRSELIHELADELVGVAEVLTLTADLEQFAECQRVMAAALERFGRLDILINNVGGTIWAKPFEHYQEREIEAEVRRSLFPTLWCCHAALAPMIEQGSGAIVNVSSVATRGIHRVPYGAAKGGVNALTACLAFETAERGIRVNATAPGGTEARHGGFRNSAEPSEQEKVWYQQIVDQSLDSSLMKRYGSIDEQVEAILFLASDAASYITGITLPVAGGDLGCQSCSVMFSVSG.

NAD(+) is bound at residue 11–35 (VITGAAQGIGRRVAERMAAEGGRLL). Serine 142 is a substrate binding site. Tyrosine 153 serves as the catalytic Proton acceptor.

The protein belongs to the short-chain dehydrogenases/reductases (SDR) family. In terms of assembly, homodimer.

It catalyses the reaction (1R,6S)-1,6-dihydroxycyclohexa-2,4-diene-1-carboxylate + NAD(+) = catechol + CO2 + NADH. The protein operates within aromatic compound metabolism; benzoate degradation via hydroxylation; catechol from benzoate: step 2/2. Its function is as follows. Degradation of 2-hydro-1,2-dihydroxy benzoate (DHB) to catechol. The chain is 1,6-dihydroxycyclohexa-2,4-diene-1-carboxylate dehydrogenase (xylL) from Pseudomonas putida (Arthrobacter siderocapsulatus).